The chain runs to 241 residues: Spiralin (241 aa).

An N-terminal signal peptide occupies residues 1–23; the sequence is MKKLLSILAVFGVSAVGTTSVVA. The N-palmitoyl cysteine moiety is linked to residue cysteine 24. Residue cysteine 24 is the site of S-diacylglycerol cysteine attachment.

This sequence belongs to the spiralin family. Seems to occur as dimer, tetramers, and large oligomers of identical chains. Palmitate and stearate are the major lipid components.

It localises to the cell membrane. Major membrane protein of spiroplasma. The chain is Spiralin (spi) from Spiroplasma citri.